The sequence spans 399 residues: MPDPGWAARTPEANDLLLTAGTGVGTHLANQTAWTTLGASHHASGVASAINTAATAASWLGVGSAASALNVTMLNATLHGLAGWVDVKPAVVSTAIAAFETANAAMRPAPECMENRDEWGVDNAINPSVLWTLTPRIVSLDVEYFGVMWPNNAAVGATYGGVLAALAESLAIPPPVATMGASPAAPAQAAAAVGQAAAEAAAGDGMRSAYQGVQAGSTGAGQSTSAGENFGNQLSTFMQPMQAVMQAAPQALQAPSGLMQAPMSAMQPLQSMVGMFANPGALGMGGAAPGASAASAAGGISAAATEVGAGGGGAALGGGGMPATSFTRPVSAFESGTSGRPVGLRPSGALGADVVRAPTTTVGGTPIGGMPVGHAAGGHRGSHGKSEQAATVRVVDDRR.

The tract at residues 375 to 399 (AAGGHRGSHGKSEQAATVRVVDDRR) is disordered.

It belongs to the mycobacterial PPE family.

This is an uncharacterized protein from Mycobacterium tuberculosis (strain ATCC 25618 / H37Rv).